The sequence spans 184 residues: Envelope protein 169 (184 aa).

Residues 1–6 lie on the Intravirion side of the membrane; it reads MKKYIK. Residues 7–27 form a helical membrane-spanning segment; it reads MYLVLLIAIILFITILVIFLI. Residues 28 to 184 lie on the Virion surface side of the membrane; the sequence is SGLFYPEQNP…TVMAIPRKVL (157 aa).

The protein belongs to the asfivirus envelope protein p22 family.

Its subcellular location is the virion membrane. The protein localises to the host cell membrane. The sequence is that of Envelope protein 169 from Ornithodoros (relapsing fever ticks).